The following is a 196-amino-acid chain: uncharacterized protein (196 aa).

The chain crosses the membrane as a helical span at residues 71–87; that stretch reads YVKLIGTGCYVAILISG.

It is found in the membrane. This is an uncharacterized protein from Dictyostelium discoideum (Social amoeba).